Consider the following 248-residue polypeptide: Ribosomal RNA small subunit methyltransferase J (248 aa).

S-adenosyl-L-methionine is bound by residues 98–99 (RD), 114–115 (ER), 150–151 (SS), and Asp168.

The protein belongs to the methyltransferase superfamily. RsmJ family.

It localises to the cytoplasm. The catalysed reaction is guanosine(1516) in 16S rRNA + S-adenosyl-L-methionine = N(2)-methylguanosine(1516) in 16S rRNA + S-adenosyl-L-homocysteine + H(+). Its function is as follows. Specifically methylates the guanosine in position 1516 of 16S rRNA. The protein is Ribosomal RNA small subunit methyltransferase J of Shewanella baltica (strain OS195).